The chain runs to 144 residues: Protein MIX23 (144 aa).

Alanine 2 carries the post-translational modification N-acetylalanine. Positions valine 82 to glutamate 120 form a coiled coil. The residue at position 100 (lysine 100) is an N6-acetyllysine.

Belongs to the MIX23 family.

The protein is Protein MIX23 of Homo sapiens (Human).